Consider the following 567-residue polypeptide: TPR repeat-containing protein MJ1428 (567 aa).

13 TPR repeats span residues Tyr14–Asn47, Pro48–Asn81, Tyr83–Glu115, Glu116–Lys148, Leu150–His183, Ile199–Ser234, Ile236–Ser268, Leu269–Asn301, Tyr303–Glu335, Leu344–Ser379, Arg380–Asp412, Ser414–Leu446, and Ala505–Arg538.

The polypeptide is TPR repeat-containing protein MJ1428 (Methanocaldococcus jannaschii (strain ATCC 43067 / DSM 2661 / JAL-1 / JCM 10045 / NBRC 100440) (Methanococcus jannaschii)).